Reading from the N-terminus, the 687-residue chain is SLCO1B3-SLCO1B7 readthrough transcript protein (687 aa).

The Cytoplasmic portion of the chain corresponds to 1-29 (MDQHQHLNKTAESASSEKKKTRRCNGFKM). The chain crosses the membrane as a helical span at residues 30-50 (FLAALSFSYIAKALGGIIMKI). Topologically, residues 51-63 (SITQIERRFDISS) are extracellular. A helical membrane pass occupies residues 64–84 (SLAGLIDGSFEIGNLLVIVFV). Topologically, residues 85 to 96 (SYFGSKLHRPKL) are cytoplasmic. Residues 97 to 117 (IGIGCLLMGTGSILTSLPHFF) form a helical membrane-spanning segment. Topologically, residues 118 to 170 (MGYYRYSKETNIDPSENSTSNLPNCLINQMLSLNRTPSEIIERGCVKESGSHM) are extracellular. N-linked (GlcNAc...) asparagine glycosylation is found at N134 and N151. Residues 171-191 (WIYVFMGNMLRGIGETPIVPL) form a helical membrane-spanning segment. The Cytoplasmic segment spans residues 192-206 (GISYIDDFAKEGHSS). The chain crosses the membrane as a helical span at residues 207–227 (LYLGTVNVMGMTGLVFAFMLG). Over 228–258 (SLFAKMYVDIGYVDLSTIRITPKDSRWVGAW) the chain is Extracellular. Residues 259-279 (WLGFLVSGIVSIISSIPFFFL) traverse the membrane as a helical segment. At 280–339 (PLNPNKPQKERKVSLFLHVLKTNDKRNQIANLTNRRKYITKNVTGFFQSLKSILTNPLYV) the chain is on the cytoplasmic side. Residues 340–360 (IFVIFTLLHMSSYIASLTYII) traverse the membrane as a helical segment. At 361–376 (KMVEQQYGWSASKTNF) the chain is on the extracellular side. Residues 377–397 (LLGVLALPAVAIGMFSGGYII) form a helical membrane-spanning segment. Over 398–409 (KKFKLSLVGLAK) the chain is Cytoplasmic. The chain crosses the membrane as a helical span at residues 410–430 (LAFCSATVHLLSQVLYFFLIC). At 431–539 (ESKSVAGLTL…CTRKSYVYFV (109 aa)) the chain is on the extracellular side. Positions 453-508 (DVPLSYCNSECNCDESQWEPVCGNNGITYLSPCLAGCKSSSGNKEPIVFYNCSCVE) constitute a Kazal-like domain. Intrachain disulfides connect C459–C489, C465–C485, and C474–C506. N503 and N516 each carry an N-linked (GlcNAc...) asparagine glycan. The helical transmembrane segment at 540–560 (IQVLDAFLCAVGLTSYSVLVI) threads the bilayer. Over 561–568 (RIVQPELK) the chain is Cytoplasmic. A helical transmembrane segment spans residues 569–589 (ALAIGFHSMIMRSLGGILVPI). Topologically, residues 590–624 (YFGALIDTTCMKWSTNSCGARGACRIYNSTYLGRA) are extracellular. N617 is a glycosylation site (N-linked (GlcNAc...) asparagine). The helical transmembrane segment at 625–645 (FFGLKVALIFPVLVLLTVFIF) threads the bilayer. At 646 to 687 (VVRKKSHGKDTKVLENERQVMDEANLEFLNDSEHFVPSAEEQ) the chain is on the cytoplasmic side.

Belongs to the organo anion transporter (TC 2.A.60) family. In terms of tissue distribution, expressed in the perivenular areas (centrilobular) of the liver (at protein level).

It localises to the smooth endoplasmic reticulum membrane. The protein resides in the cell membrane. It is found in the endoplasmic reticulum membrane. It catalyses the reaction 17beta-estradiol 17-O-(beta-D-glucuronate)(out) = 17beta-estradiol 17-O-(beta-D-glucuronate)(in). It carries out the reaction dehydroepiandrosterone 3-sulfate(out) = dehydroepiandrosterone 3-sulfate(in). The enzyme catalyses taurocholate(out) = taurocholate(in). The catalysed reaction is lithocholate(out) = lithocholate(in). Transport activity is induced by farnesoid X receptor (FXR) agonists such as chenodeoxycholate. Its function is as follows. Mediates the Na(+)-independent uptake of organic anions. Transports the conjugated steroids 17-beta-glucuronosyl estradiol (17beta-estradiol 17-O-(beta-D-glucuronate) or E2G) and dehydroepiandrosterone 3-sulfate (DHEAS) at the smooth endoplasmic reticulum membrane (SER), granting access to metabolizing enzymes. Contributes to the metabolism of bile acids such as taurocholate (cholyltaurine) and lithocholate, by functioning as a doorway between SER and cytosol, thereby decreasing their circulating levels and protecting the organism from their detergent properties. Regulates access or exit of drugs to the SER lumen. This chain is SLCO1B3-SLCO1B7 readthrough transcript protein, found in Homo sapiens (Human).